Reading from the N-terminus, the 229-residue chain is UPF0758 protein CLL_A0562 (229 aa).

In terms of domain architecture, MPN spans 107-229 (KIMSPNDLAM…FISLKEKGFI (123 aa)). The Zn(2+) site is built by histidine 178, histidine 180, and aspartate 191. Positions 178–191 (HNHPSGDPTPSKED) match the JAMM motif motif.

It belongs to the UPF0758 family.

The sequence is that of UPF0758 protein CLL_A0562 from Clostridium botulinum (strain Eklund 17B / Type B).